We begin with the raw amino-acid sequence, 349 residues long: 5,10-methylenetetrahydromethanopterin reductase (349 aa).

This sequence belongs to the mer family. In terms of assembly, homotetramer composed of two loosely associated dimers.

It is found in the cytoplasm. It carries out the reaction 5-methyl-5,6,7,8-tetrahydromethanopterin + oxidized coenzyme F420-(gamma-L-Glu)(n) + H(+) = 5,10-methylenetetrahydromethanopterin + reduced coenzyme F420-(gamma-L-Glu)(n). Its pathway is one-carbon metabolism; methanogenesis from CO(2); methyl-coenzyme M from 5,10-methylene-5,6,7,8-tetrahydromethanopterin: step 1/2. Its activity is regulated as follows. Requires the presence of relatively high concentrations of either sulfate or phosphate for maximal activity. Functionally, catalyzes the reversible reduction of methylene-H(4)MPT to methyl-H(4)MPT. This Methanopyrus kandleri (strain AV19 / DSM 6324 / JCM 9639 / NBRC 100938) protein is 5,10-methylenetetrahydromethanopterin reductase.